Consider the following 432-residue polypeptide: Mitochondrial distribution and morphology protein 12 (432 aa).

Residues 1 to 432 (MSIEVDWRAA…VFPSFWTFLI (432 aa)) enclose the SMP-LTD domain. Disordered regions lie at residues 182-273 (WTDP…PRMR) and 354-377 (QQEARGQDDRPWSSADPTASPKRQ). Over residues 214-234 (TSNPTSRPSTSSTLPSHPSAS) the composition is skewed to low complexity. 2 stretches are compositionally biased toward basic and acidic residues: residues 243 to 253 (TGKEHGSLAED) and 355 to 364 (QEARGQDDRP).

This sequence belongs to the MDM12 family. Component of the ER-mitochondria encounter structure (ERMES) or MDM complex, composed of mmm1, mdm10, mdm12 and mdm34. A mmm1 homodimer associates with one molecule of mdm12 on each side in a pairwise head-to-tail manner, and the SMP-LTD domains of mmm1 and mdm12 generate a continuous hydrophobic tunnel for phospholipid trafficking.

The protein resides in the mitochondrion outer membrane. It localises to the endoplasmic reticulum membrane. Functionally, component of the ERMES/MDM complex, which serves as a molecular tether to connect the endoplasmic reticulum (ER) and mitochondria. Components of this complex are involved in the control of mitochondrial shape and protein biogenesis, and function in nonvesicular lipid trafficking between the ER and mitochondria. Mdm12 is required for the interaction of the ER-resident membrane protein mmm1 and the outer mitochondrial membrane-resident beta-barrel protein mdm10. The mdm12-mmm1 subcomplex functions in the major beta-barrel assembly pathway that is responsible for biogenesis of all mitochondrial outer membrane beta-barrel proteins, and acts in a late step after the SAM complex. The mdm10-mdm12-mmm1 subcomplex further acts in the TOM40-specific pathway after the action of the mdm12-mmm1 complex. Essential for establishing and maintaining the structure of mitochondria and maintenance of mtDNA nucleoids. This chain is Mitochondrial distribution and morphology protein 12, found in Aspergillus oryzae (strain ATCC 42149 / RIB 40) (Yellow koji mold).